A 255-amino-acid chain; its full sequence is Type III pantothenate kinase (255 aa).

6 to 13 lines the ATP pocket; sequence DIGNTNIV. 107–110 serves as a coordination point for substrate; that stretch reads GSDC. The Proton acceptor role is filled by aspartate 109. Aspartate 129 is a binding site for K(+). Residue threonine 132 coordinates ATP. Residue threonine 184 participates in substrate binding.

It belongs to the type III pantothenate kinase family. Homodimer. The cofactor is NH4(+). K(+) serves as cofactor.

Its subcellular location is the cytoplasm. The catalysed reaction is (R)-pantothenate + ATP = (R)-4'-phosphopantothenate + ADP + H(+). Its pathway is cofactor biosynthesis; coenzyme A biosynthesis; CoA from (R)-pantothenate: step 1/5. Its function is as follows. Catalyzes the phosphorylation of pantothenate (Pan), the first step in CoA biosynthesis. The protein is Type III pantothenate kinase of Bifidobacterium longum subsp. infantis (strain ATCC 15697 / DSM 20088 / JCM 1222 / NCTC 11817 / S12).